The sequence spans 190 residues: ADP-ribosylation factor-like protein 6 (190 aa).

The N-myristoyl glycine moiety is linked to residue glycine 2. Residues 24–31, 69–73, and 130–133 each bind GTP; these read GLDNSGKT, DMAGQ, and NKMD.

The protein belongs to the small GTPase superfamily. Arf family. In terms of tissue distribution, specifically expressed in ciliated cells.

The protein localises to the cytoplasm. This is ADP-ribosylation factor-like protein 6 from Caenorhabditis elegans.